We begin with the raw amino-acid sequence, 303 residues long: tRNA pseudouridine synthase B (303 aa).

Asp-47 functions as the Nucleophile in the catalytic mechanism.

This sequence belongs to the pseudouridine synthase TruB family. Type 1 subfamily.

The enzyme catalyses uridine(55) in tRNA = pseudouridine(55) in tRNA. Its function is as follows. Responsible for synthesis of pseudouridine from uracil-55 in the psi GC loop of transfer RNAs. This chain is tRNA pseudouridine synthase B, found in Legionella pneumophila (strain Paris).